We begin with the raw amino-acid sequence, 176 residues long: GTP-dependent dephospho-CoA kinase (176 aa).

Residues D47, V48, D66, and E125 each coordinate GTP.

Belongs to the GTP-dependent DPCK family.

The catalysed reaction is 3'-dephospho-CoA + GTP = GDP + CoA + H(+). It functions in the pathway cofactor biosynthesis; coenzyme A biosynthesis. Functionally, catalyzes the GTP-dependent phosphorylation of the 3'-hydroxyl group of dephosphocoenzyme A to form coenzyme A (CoA). The sequence is that of GTP-dependent dephospho-CoA kinase from Methanocella arvoryzae (strain DSM 22066 / NBRC 105507 / MRE50).